Here is a 502-residue protein sequence, read N- to C-terminus: ATP synthase subunit alpha (502 aa).

169-176 (GDRQTGKT) contributes to the ATP binding site.

It belongs to the ATPase alpha/beta chains family. In terms of assembly, F-type ATPases have 2 components, CF(1) - the catalytic core - and CF(0) - the membrane proton channel. CF(1) has five subunits: alpha(3), beta(3), gamma(1), delta(1), epsilon(1). CF(0) has three main subunits: a(1), b(2) and c(9-12). The alpha and beta chains form an alternating ring which encloses part of the gamma chain. CF(1) is attached to CF(0) by a central stalk formed by the gamma and epsilon chains, while a peripheral stalk is formed by the delta and b chains.

The protein localises to the cell membrane. It carries out the reaction ATP + H2O + 4 H(+)(in) = ADP + phosphate + 5 H(+)(out). Its function is as follows. Produces ATP from ADP in the presence of a proton gradient across the membrane. The alpha chain is a regulatory subunit. This Priestia megaterium (strain ATCC 12872 / QMB1551) (Bacillus megaterium) protein is ATP synthase subunit alpha.